The following is a 140-amino-acid chain: Large ribosomal subunit protein bL17 (140 aa).

Belongs to the bacterial ribosomal protein bL17 family. As to quaternary structure, part of the 50S ribosomal subunit. Contacts protein L32.

This chain is Large ribosomal subunit protein bL17, found in Rhizobium etli (strain ATCC 51251 / DSM 11541 / JCM 21823 / NBRC 15573 / CFN 42).